The chain runs to 279 residues: Shikimate dehydrogenase (NADP(+)) (279 aa).

Shikimate is bound by residues 20–22 and T67; that span reads SRS. K71 functions as the Proton acceptor in the catalytic mechanism. NADP(+) is bound at residue D83. Shikimate is bound by residues N92 and D108. Residues 134–138 and L223 contribute to the NADP(+) site; that span reads GAGGA. Shikimate is bound at residue Y225. Residue G246 coordinates NADP(+).

The protein belongs to the shikimate dehydrogenase family. As to quaternary structure, homodimer.

The enzyme catalyses shikimate + NADP(+) = 3-dehydroshikimate + NADPH + H(+). The protein operates within metabolic intermediate biosynthesis; chorismate biosynthesis; chorismate from D-erythrose 4-phosphate and phosphoenolpyruvate: step 4/7. Involved in the biosynthesis of the chorismate, which leads to the biosynthesis of aromatic amino acids. Catalyzes the reversible NADPH linked reduction of 3-dehydroshikimate (DHSA) to yield shikimate (SA). This Cereibacter sphaeroides (strain ATCC 17023 / DSM 158 / JCM 6121 / CCUG 31486 / LMG 2827 / NBRC 12203 / NCIMB 8253 / ATH 2.4.1.) (Rhodobacter sphaeroides) protein is Shikimate dehydrogenase (NADP(+)).